Reading from the N-terminus, the 592-residue chain is 1,4-alpha-glucan branching enzyme GlgB 2 (592 aa).

Aspartate 274 (nucleophile) is an active-site residue. Glutamate 327 serves as the catalytic Proton donor.

This sequence belongs to the glycosyl hydrolase 13 family. GlgB subfamily. Monomer.

The enzyme catalyses Transfers a segment of a (1-&gt;4)-alpha-D-glucan chain to a primary hydroxy group in a similar glucan chain.. Its pathway is glycan biosynthesis; glycogen biosynthesis. Its function is as follows. Catalyzes the formation of the alpha-1,6-glucosidic linkages in glycogen by scission of a 1,4-alpha-linked oligosaccharide from growing alpha-1,4-glucan chains and the subsequent attachment of the oligosaccharide to the alpha-1,6 position. The polypeptide is 1,4-alpha-glucan branching enzyme GlgB 2 (Streptomyces avermitilis (strain ATCC 31267 / DSM 46492 / JCM 5070 / NBRC 14893 / NCIMB 12804 / NRRL 8165 / MA-4680)).